Consider the following 829-residue polypeptide: Dipeptidyl peptidase family member 2 (829 aa).

Residues 1-27 are Cytoplasmic-facing; sequence MENDNYDVEEQGCSVFNGKHGYFARSC. Residues 28–48 form a helical; Signal-anchor for type II membrane protein membrane-spanning segment; it reads CVVFILIICVIFVFSVIFTFM. At 49-829 the chain is on the extracellular side; the sequence is QNPINLNSDN…DCFKSNLDLL (781 aa). N-linked (GlcNAc...) asparagine glycans are attached at residues Asn-61, Asn-66, Asn-183, Asn-209, Asn-314, and Asn-359. A disulfide bridge connects residues Cys-514 and Cys-533. Ser-691 functions as the Charge relay system in the catalytic mechanism. Residues Cys-711 and Cys-821 are joined by a disulfide bond. The N-linked (GlcNAc...) asparagine glycan is linked to Asn-754. Residues Asp-768 and His-800 each act as charge relay system in the active site.

The protein belongs to the peptidase S9B family. DPPIV subfamily.

It localises to the cell membrane. Its function is as follows. Removes N-terminal dipeptides sequentially from polypeptides. Essential for control of distal tip cell migration. The protein is Dipeptidyl peptidase family member 2 (dpf-2) of Caenorhabditis elegans.